The primary structure comprises 185 residues: Segregation and condensation protein B (185 aa).

It belongs to the ScpB family. In terms of assembly, homodimer. Homodimerization may be required to stabilize the binding of ScpA to the Smc head domains. Component of a cohesin-like complex composed of ScpA, ScpB and the Smc homodimer, in which ScpA and ScpB bind to the head domain of Smc. The presence of the three proteins is required for the association of the complex with DNA.

It localises to the cytoplasm. Its function is as follows. Participates in chromosomal partition during cell division. May act via the formation of a condensin-like complex containing Smc and ScpA that pull DNA away from mid-cell into both cell halves. This Carboxydothermus hydrogenoformans (strain ATCC BAA-161 / DSM 6008 / Z-2901) protein is Segregation and condensation protein B.